A 222-amino-acid chain; its full sequence is Arginine ABC transporter permease protein ArtM (222 aa).

Residues 1–15 (MFEYLPELMKGLHTS) lie on the Periplasmic side of the membrane. The 197-residue stretch at 12 to 208 (LHTSLTLTVA…VVNGLLTLMM (197 aa)) folds into the ABC transmembrane type-1 domain. Residues 16–36 (LTLTVASLIVALILALIFTII) form a helical membrane-spanning segment. Over 37 to 49 (LTLKTPVLVWLVR) the chain is Cytoplasmic. Residues 50–70 (GYITLFTGTPLLVQIFLIYYG) form a helical membrane-spanning segment. Residues 71–79 (PGQFPTLQE) are Periplasmic-facing. Residues 80 to 100 (YPALWHLLSEPWLCALIALSL) form a helical membrane-spanning segment. Over 101–154 (NSAAYTTQLFYGAIRAIPEGQWQSCSALGMSKKDTLAILLPYAFKRSLSSYSNE) the chain is Cytoplasmic. Residues 155-175 (VVLVFKSTSLAYTITLMEVMG) form a helical membrane-spanning segment. The Periplasmic segment spans residues 176–186 (YSQLLYGRTYD). The helical transmembrane segment at 187 to 207 (VMVFGAAGIIYLVVNGLLTLM) threads the bilayer. The Cytoplasmic portion of the chain corresponds to 208 to 222 (MRLIERKALAFERRN).

This sequence belongs to the binding-protein-dependent transport system permease family. HisMQ subfamily. In terms of assembly, the complex is composed of two ATP-binding proteins (ArtP), two transmembrane proteins (ArtM and ArtQ) and two solute-binding proteins (ArtJ and ArtI).

The protein localises to the cell inner membrane. Its function is as follows. Part of the ABC transporter complex ArtPIQMJ involved in arginine transport. Probably responsible for the translocation of the substrate across the membrane. The sequence is that of Arginine ABC transporter permease protein ArtM (artM) from Escherichia coli (strain K12).